Reading from the N-terminus, the 139-residue chain is MKKGTVLNSEISSVISRLGHTDTLVVCDAGLPIPNSAARIDMALTQGVPSFMQVVDVVTREMQVEAAILATEIKQQNPQLHETLLTHLEQLQQYQGNTIKISYTTHEQFKKLTADSQAVIRSGECSPYANVILCAGVTF.

The Proton donor role is filled by histidine 20. Residues aspartate 28, histidine 106, and 128–130 each bind substrate; that span reads YAN.

It belongs to the RbsD / FucU family. RbsD subfamily. In terms of assembly, homodecamer.

It localises to the cytoplasm. It carries out the reaction beta-D-ribopyranose = beta-D-ribofuranose. The protein operates within carbohydrate metabolism; D-ribose degradation; D-ribose 5-phosphate from beta-D-ribopyranose: step 1/2. In terms of biological role, catalyzes the interconversion of beta-pyran and beta-furan forms of D-ribose. This is D-ribose pyranase from Salmonella arizonae (strain ATCC BAA-731 / CDC346-86 / RSK2980).